Reading from the N-terminus, the 237-residue chain is Bax inhibitor 1 (237 aa).

Residues 1–29 (MNIFDRKINFDALLKFSHITPSTQQHLKK) lie on the Cytoplasmic side of the membrane. Lysine 7 participates in a covalent cross-link: Glycyl lysine isopeptide (Lys-Gly) (interchain with G-Cter in ubiquitin). The chain crosses the membrane as a helical span at residues 30–50 (VYASFALCMFVAAAGAYVHVV). Over 51 to 52 (TH) the chain is Lumenal. The chain crosses the membrane as a helical span at residues 53 to 73 (FIQAGLLSALGSLALMIWLMA). Residues 74–86 (TPHSHETEQKRLG) are Cytoplasmic-facing. Residues 87–107 (LLAGFAFLTGVGLGPALELCI) traverse the membrane as a helical segment. The Lumenal portion of the chain corresponds to 108 to 112 (AVNPS). The chain crosses the membrane as a helical span at residues 113–133 (ILPTAFMGTAMIFTCFSLSAL). Topologically, residues 134–139 (YARRRS) are cytoplasmic. Residues 140-160 (YLFLGGILMSAMSLMLLSSLG) traverse the membrane as a helical segment. Residues 161-166 (NLFFGS) are Lumenal-facing. A helical membrane pass occupies residues 167–187 (IWLFQANLYLGLLVMCGFVLF). The Cytoplasmic segment spans residues 188–206 (DTQLIIEKAEHGDKDYIWH). Positions 207–227 (CVDLFLDFVTLFRKLMLILAF) form an intramembrane region, helical. Residues 228 to 237 (NEKDKKKEKK) are Cytoplasmic-facing.

Belongs to the BI1 family. Interacts with BCL2. Interacts with BCL2L1. Interacts with ERN1. In terms of processing, ubiquitinated by BFAR, leading to proteasomal degradation. As to expression, highly abundant in adult testis.

It localises to the endoplasmic reticulum membrane. Endoplasmic reticulum (ER)-resident protein that confers cellular protection as an anti-apoptotic protein by limiting multiple stress-inducing pathways surrounding the endoplasmic reticulum and mitochondria. Inhibits the activities of the key sensor for the endoplasmic reticulum unfolded protein response IRE1alpha/ERN1 both directly and by blocking BAX/BAK binding. Modulates ER calcium homeostasis by acting as a calcium-leak channel. Negatively regulates autophagy and autophagosome formation, especially during periods of nutrient deprivation, and reduces cell survival during starvation. The sequence is that of Bax inhibitor 1 (Tmbim6) from Mus musculus (Mouse).